The following is a 161-amino-acid chain: Phosphopantetheine adenylyltransferase (161 aa).

T10 contacts substrate. Residues 10–11 (TF) and H18 contribute to the ATP site. Residues K42, L75, and R89 each contribute to the substrate site. ATP contacts are provided by residues 90–92 (GLR), E100, and 125–131 (YSFLSSS).

This sequence belongs to the bacterial CoaD family. As to quaternary structure, homohexamer. Mg(2+) is required as a cofactor.

The protein resides in the cytoplasm. It catalyses the reaction (R)-4'-phosphopantetheine + ATP + H(+) = 3'-dephospho-CoA + diphosphate. Its pathway is cofactor biosynthesis; coenzyme A biosynthesis; CoA from (R)-pantothenate: step 4/5. Its function is as follows. Reversibly transfers an adenylyl group from ATP to 4'-phosphopantetheine, yielding dephospho-CoA (dPCoA) and pyrophosphate. This is Phosphopantetheine adenylyltransferase from Thermodesulfovibrio yellowstonii (strain ATCC 51303 / DSM 11347 / YP87).